Consider the following 159-residue polypeptide: 2-C-methyl-D-erythritol 2,4-cyclodiphosphate synthase (159 aa).

The a divalent metal cation site is built by D10 and H12. 4-CDP-2-C-methyl-D-erythritol 2-phosphate contacts are provided by residues 10–12 (DVH) and 36–37 (HS). H44 contacts a divalent metal cation. Residues 58-60 (DIG), 134-137 (TTTE), F141, and R144 contribute to the 4-CDP-2-C-methyl-D-erythritol 2-phosphate site.

The protein belongs to the IspF family. Homotrimer. Requires a divalent metal cation as cofactor.

It carries out the reaction 4-CDP-2-C-methyl-D-erythritol 2-phosphate = 2-C-methyl-D-erythritol 2,4-cyclic diphosphate + CMP. It participates in isoprenoid biosynthesis; isopentenyl diphosphate biosynthesis via DXP pathway; isopentenyl diphosphate from 1-deoxy-D-xylulose 5-phosphate: step 4/6. Functionally, involved in the biosynthesis of isopentenyl diphosphate (IPP) and dimethylallyl diphosphate (DMAPP), two major building blocks of isoprenoid compounds. Catalyzes the conversion of 4-diphosphocytidyl-2-C-methyl-D-erythritol 2-phosphate (CDP-ME2P) to 2-C-methyl-D-erythritol 2,4-cyclodiphosphate (ME-CPP) with a corresponding release of cytidine 5-monophosphate (CMP). In Bacteroides fragilis (strain ATCC 25285 / DSM 2151 / CCUG 4856 / JCM 11019 / LMG 10263 / NCTC 9343 / Onslow / VPI 2553 / EN-2), this protein is 2-C-methyl-D-erythritol 2,4-cyclodiphosphate synthase.